Reading from the N-terminus, the 272-residue chain is Glutamate racemase (272 aa).

Residues 16 to 17 (DS) and 48 to 49 (YG) contribute to the substrate site. The active-site Proton donor/acceptor is the Cys-79. 80–81 (NT) serves as a coordination point for substrate. Cys-191 functions as the Proton donor/acceptor in the catalytic mechanism. 192 to 193 (TH) provides a ligand contact to substrate.

Belongs to the aspartate/glutamate racemases family.

The catalysed reaction is L-glutamate = D-glutamate. The protein operates within cell wall biogenesis; peptidoglycan biosynthesis. Its function is as follows. Provides the (R)-glutamate required for cell wall biosynthesis. The protein is Glutamate racemase of Chlorobaculum parvum (strain DSM 263 / NCIMB 8327) (Chlorobium vibrioforme subsp. thiosulfatophilum).